The sequence spans 354 residues: DNA polymerase IV (354 aa).

The 185-residue stretch at 14 to 198 folds into the UmuC domain; the sequence is IIHIDMDAFF…MDIAKFHGVG (185 aa). 2 residues coordinate Mg(2+): D18 and D116. Residue E117 is part of the active site.

This sequence belongs to the DNA polymerase type-Y family. In terms of assembly, monomer. The cofactor is Mg(2+).

The protein resides in the cytoplasm. It carries out the reaction DNA(n) + a 2'-deoxyribonucleoside 5'-triphosphate = DNA(n+1) + diphosphate. Poorly processive, error-prone DNA polymerase involved in untargeted mutagenesis. Copies undamaged DNA at stalled replication forks, which arise in vivo from mismatched or misaligned primer ends. These misaligned primers can be extended by PolIV. Exhibits no 3'-5' exonuclease (proofreading) activity. May be involved in translesional synthesis, in conjunction with the beta clamp from PolIII. This Streptococcus gordonii (strain Challis / ATCC 35105 / BCRC 15272 / CH1 / DL1 / V288) protein is DNA polymerase IV.